Consider the following 224-residue polypeptide: Putative gastrointestinal growth factor xP4 (224 aa).

The N-terminal stretch at 1 to 17 (MANSVFWAIAVALVLGA) is a signal peptide. P-type domains are found at residues 25-68 (YRCG…YTPW), 73-117 (TICN…YQPI), 123-167 (RDCS…FKPE), and 173-216 (LQCA…FYPD). Disulfide bonds link Cys27–Cys53, Cys37–Cys52, Cys47–Cys64, Cys75–Cys102, Cys86–Cys101, Cys96–Cys113, Cys125–Cys152, Cys136–Cys151, Cys146–Cys163, Cys175–Cys201, Cys185–Cys200, and Cys195–Cys212. A glycan (N-linked (GlcNAc...) asparagine) is linked at Asn104.

Post-translationally, glycosylated. Stomach mucosa.

The protein resides in the secreted. Its function is as follows. May act as a growth factor. This Xenopus laevis (African clawed frog) protein is Putative gastrointestinal growth factor xP4 (p4).